The following is a 293-amino-acid chain: Ribosomal protein L11 methyltransferase (293 aa).

4 residues coordinate S-adenosyl-L-methionine: T145, G166, D188, and N230.

It belongs to the methyltransferase superfamily. PrmA family.

It localises to the cytoplasm. It carries out the reaction L-lysyl-[protein] + 3 S-adenosyl-L-methionine = N(6),N(6),N(6)-trimethyl-L-lysyl-[protein] + 3 S-adenosyl-L-homocysteine + 3 H(+). Its function is as follows. Methylates ribosomal protein L11. The chain is Ribosomal protein L11 methyltransferase from Yersinia pseudotuberculosis serotype I (strain IP32953).